The following is a 197-amino-acid chain: Auxin-responsive protein IAA31 (197 aa).

Disordered stretches follow at residues 1–43 (MENL…DQAK) and 66–90 (SCLQ…ETQQ). The short motif at 9–13 (LRLGL) is the EAR-like (transcriptional repression) element. The 88-residue stretch at 99-186 (GLFVKVSMDG…TCKRLRIMKG (88 aa)) folds into the PB1 domain.

The protein belongs to the Aux/IAA family. In terms of assembly, homodimers and heterodimers. As to expression, highly expressed in etiolated seedlings. Expressed in roots.

Its subcellular location is the nucleus. Functionally, aux/IAA proteins are short-lived transcriptional factors that function as repressors of early auxin response genes at low auxin concentrations. The chain is Auxin-responsive protein IAA31 (IAA31) from Oryza sativa subsp. japonica (Rice).